A 131-amino-acid polypeptide reads, in one-letter code: UPF0344 protein Sca_0577 (131 aa).

4 consecutive transmembrane segments (helical) span residues 1–21 (MLHL…VSYI), 42–62 (LFLV…FATA), 69–89 (LLTL…VTLV), and 99–119 (GLFW…IILP).

The protein belongs to the UPF0344 family.

It localises to the cell membrane. The protein is UPF0344 protein Sca_0577 of Staphylococcus carnosus (strain TM300).